The sequence spans 227 residues: Phosphoribosylformylglycinamidine synthase subunit PurQ (227 aa).

A Glutamine amidotransferase type-1 domain is found at 3 to 225 (FAVIVFPGSN…LKQWRETYVV (223 aa)). The Nucleophile role is filled by Cys-86. Residues His-194 and Glu-196 contribute to the active site.

Part of the FGAM synthase complex composed of 1 PurL, 1 PurQ and 2 PurS subunits.

The protein resides in the cytoplasm. It catalyses the reaction N(2)-formyl-N(1)-(5-phospho-beta-D-ribosyl)glycinamide + L-glutamine + ATP + H2O = 2-formamido-N(1)-(5-O-phospho-beta-D-ribosyl)acetamidine + L-glutamate + ADP + phosphate + H(+). The catalysed reaction is L-glutamine + H2O = L-glutamate + NH4(+). It participates in purine metabolism; IMP biosynthesis via de novo pathway; 5-amino-1-(5-phospho-D-ribosyl)imidazole from N(2)-formyl-N(1)-(5-phospho-D-ribosyl)glycinamide: step 1/2. Functionally, part of the phosphoribosylformylglycinamidine synthase complex involved in the purines biosynthetic pathway. Catalyzes the ATP-dependent conversion of formylglycinamide ribonucleotide (FGAR) and glutamine to yield formylglycinamidine ribonucleotide (FGAM) and glutamate. The FGAM synthase complex is composed of three subunits. PurQ produces an ammonia molecule by converting glutamine to glutamate. PurL transfers the ammonia molecule to FGAR to form FGAM in an ATP-dependent manner. PurS interacts with PurQ and PurL and is thought to assist in the transfer of the ammonia molecule from PurQ to PurL. The polypeptide is Phosphoribosylformylglycinamidine synthase subunit PurQ (Bacillus cereus (strain B4264)).